The following is a 259-amino-acid chain: UPF0246 protein PSPA7_1607 (259 aa).

The protein belongs to the UPF0246 family.

The polypeptide is UPF0246 protein PSPA7_1607 (Pseudomonas paraeruginosa (strain DSM 24068 / PA7) (Pseudomonas aeruginosa (strain PA7))).